The sequence spans 110 residues: Small ribosomal subunit protein uS10m (110 aa).

Belongs to the universal ribosomal protein uS10 family.

The protein resides in the mitochondrion. The protein is Small ribosomal subunit protein uS10m (RPS10) of Pisum sativum (Garden pea).